Here is a 493-residue protein sequence, read N- to C-terminus: Aspartyl/glutamyl-tRNA(Asn/Gln) amidotransferase subunit B (493 aa).

Residues 473-493 (KSGGKANPKQAADLVNKRLTE) form a disordered region.

This sequence belongs to the GatB/GatE family. GatB subfamily. As to quaternary structure, heterotrimer of A, B and C subunits.

It carries out the reaction L-glutamyl-tRNA(Gln) + L-glutamine + ATP + H2O = L-glutaminyl-tRNA(Gln) + L-glutamate + ADP + phosphate + H(+). It catalyses the reaction L-aspartyl-tRNA(Asn) + L-glutamine + ATP + H2O = L-asparaginyl-tRNA(Asn) + L-glutamate + ADP + phosphate + 2 H(+). Allows the formation of correctly charged Asn-tRNA(Asn) or Gln-tRNA(Gln) through the transamidation of misacylated Asp-tRNA(Asn) or Glu-tRNA(Gln) in organisms which lack either or both of asparaginyl-tRNA or glutaminyl-tRNA synthetases. The reaction takes place in the presence of glutamine and ATP through an activated phospho-Asp-tRNA(Asn) or phospho-Glu-tRNA(Gln). The protein is Aspartyl/glutamyl-tRNA(Asn/Gln) amidotransferase subunit B of Treponema denticola (strain ATCC 35405 / DSM 14222 / CIP 103919 / JCM 8153 / KCTC 15104).